The sequence spans 452 residues: Na(+)/H(+) antiporter NhaA (452 aa).

The next 11 membrane-spanning stretches (helical) occupy residues 27–47 (FSGIFLFFCAVVAMISANSAL), 67–87 (FIGMSLHHWINDVLMSFFFLM), 108–128 (AFPAIAALGGMIVPAIVYTLF), 137–157 (GFGIPMATDIAFALGVLLLLG), 166–186 (VFLVSLAVVDDLGAVVVIAIF), 194–214 (LWLLYSVVILGLLIGLNKMGV), 216–236 (SLFPYAILGVLLWITVHNCGI), 314–334 (PWSAYFIMPVFAFANAGVAIS), 343–363 (GVLPGIMLGLIVGKPVGILGL), 381–401 (WIDILGAGMLAGIGFTMSIFI), and 414–434 (VAKIAILSASLFAGALGYFFI).

It belongs to the NhaA Na(+)/H(+) (TC 2.A.33) antiporter family.

The protein localises to the cell inner membrane. The catalysed reaction is Na(+)(in) + 2 H(+)(out) = Na(+)(out) + 2 H(+)(in). Its function is as follows. Na(+)/H(+) antiporter that extrudes sodium in exchange for external protons. This chain is Na(+)/H(+) antiporter NhaA, found in Wolinella succinogenes (strain ATCC 29543 / DSM 1740 / CCUG 13145 / JCM 31913 / LMG 7466 / NCTC 11488 / FDC 602W) (Vibrio succinogenes).